The sequence spans 186 residues: TATA box-binding protein-like 1 (186 aa).

It belongs to the TBP family. In terms of assembly, binds TFIIA and TFIIB.

Its subcellular location is the cytoplasm. The protein localises to the nucleus. In terms of biological role, part of a specialized transcription system that mediates the transcription of most ribosomal proteins through the 5'-TCT-3' motif which is a core promoter element at these genes. Seems to also mediate the transcription of NF1. Does not bind the TATA box. The protein is TATA box-binding protein-like 1 (TBPL1) of Bos taurus (Bovine).